A 786-amino-acid polypeptide reads, in one-letter code: MNERSLRILEFNKIKEKIKKYARTNAAKAKVEDLEPYDNLYEINNKLEETNEALEILISKGNPPLEGLADIHEGIERAKKGGTLSPGQLLKVGGMLKATRNMKEFFKREEVEKSYPKLEDLAYILAPVKALEDEIERAIVSEDEISDKASQTLCNIRRSLKEKNSSVREKISSIVRSNSKYLQDDLYTMRGDRYVLPVKSEYKSQVPGLVHDQSSTGATFFIEPMSLVNLNNEIRELFLKEKAEIERILSDLSLKVKINGDSCLSNLKVLVEFDFIFAKGRYASALNAIKPIVREDGAFSIFSGRHPLIENDKVVPSDIYLGEEFQTLMITGPNTGGKTVTIKTVGLLHIMGLSGLLIPARDNSSIAFFKEIFADIGDEQSIEQSLSTFSSHMTNIVNIMKHVDDKSLALFDELGAGTDPAEGAALAVSILETLRNRGAKLIATTHYSELKAYALKTDGVENASVEFDIETLRPTYRLLIGVPGKSNAFEISKRLGLVEGVIKRAKEYMSEENLQFENLIRELQEKSIIAKKEAREAKMLRDQAEDLKKKYEEKLEKLENTREKAYMDARREAKEIIANAKDEADDILKAMRELEKLGIAGGGRQRLEEERKKLKDSLEEREKGIHKMKENEGESITNVTLGMEAYLPSLNQKVIIVSMPDNRGEVQVEAGIMKVNVKLKDLRKTQVTKEEKVRRKREVKLNLSNVESRVDLRGLDAEEACYKADKYLDDAYMANLGEVTIVHGKGTGVLRKAINDMLKRHPHVKSYRLGAYGEGGDGVTMVELKG.

332–339 (GPNTGGKT) is a binding site for ATP. The Smr domain occupies 710–785 (VDLRGLDAEE…GDGVTMVELK (76 aa)).

Belongs to the DNA mismatch repair MutS family. MutS2 subfamily. Homodimer. Binds to stalled ribosomes, contacting rRNA.

In terms of biological role, endonuclease that is involved in the suppression of homologous recombination and thus may have a key role in the control of bacterial genetic diversity. Its function is as follows. Acts as a ribosome collision sensor, splitting the ribosome into its 2 subunits. Detects stalled/collided 70S ribosomes which it binds and splits by an ATP-hydrolysis driven conformational change. Acts upstream of the ribosome quality control system (RQC), a ribosome-associated complex that mediates the extraction of incompletely synthesized nascent chains from stalled ribosomes and their subsequent degradation. Probably generates substrates for RQC. This chain is Endonuclease MutS2, found in Clostridium beijerinckii (strain ATCC 51743 / NCIMB 8052) (Clostridium acetobutylicum).